Consider the following 172-residue polypeptide: Oleosin 18 kDa (172 aa).

An N-acetylalanine modification is found at A2. A polar region spans residues 2-38 (ADRDRAGQYYQQQRGQVGETVKGILPEKAPSASQALT). The hydrophobic stretch occupies residues 39–110 (VATLFPLGGL…GGLSSLTFLA (72 aa)). Helical transmembrane passes span 42–62 (LFPL…ASVV), 70–90 (VFLI…LAVA), and 91–111 (GFLT…FLAN). The disordered stretch occupies residues 147-172 (HAIQGRADQAGTGAGAGGGAGTKTSS). Over residues 158–172 (TGAGAGGGAGTKTSS) the composition is skewed to gly residues.

Belongs to the oleosin family.

The protein localises to the lipid droplet. It is found in the membrane. In terms of biological role, may have a structural role to stabilize the lipid body during desiccation of the seed by preventing coalescence of the oil. Probably interacts with both lipid and phospholipid moieties of lipid bodies. May also provide recognition signals for specific lipase anchorage in lipolysis during seedling growth. The sequence is that of Oleosin 18 kDa (OLE18) from Oryza sativa subsp. indica (Rice).